Here is a 609-residue protein sequence, read N- to C-terminus: Isopenicillin N epimerase component 1 (609 aa).

185-196 lines the AMP pocket; it reads MLSGSGTTGLPK. The tract at residues 545–570 is disordered; it reads STDNHKHNKVPLRDEGVDPRSMGSKV.

This sequence belongs to the ATP-dependent AMP-binding enzyme family.

The catalysed reaction is isopenicillin N = penicillin N. It participates in antibiotic biosynthesis; cephalosporin C biosynthesis. In terms of biological role, together with cefD2, catalyzes the reversible isomerization between isopenicillin N and penicillin N. This two-component IPN epimerase system may function by two sequential steps, an activation of isopenicillin N by the acyl-CoA synthase component cefD1, followed by epimerization by the acyl-CoA racemase component cefD2. This is Isopenicillin N epimerase component 1 (cefD1) from Hapsidospora chrysogena (Acremonium chrysogenum).